The chain runs to 456 residues: Nitrogenase molybdenum-iron protein beta chain (456 aa).

Cysteine 23, cysteine 48, cysteine 106, and serine 141 together coordinate [8Fe-7S] cluster.

Belongs to the NifD/NifK/NifE/NifN family. In terms of assembly, tetramer of two alpha and two beta chains. Forms complex with the iron protein (nitrogenase component 2). The cofactor is [8Fe-7S] cluster.

It carries out the reaction N2 + 8 reduced [2Fe-2S]-[ferredoxin] + 16 ATP + 16 H2O = H2 + 8 oxidized [2Fe-2S]-[ferredoxin] + 2 NH4(+) + 16 ADP + 16 phosphate + 6 H(+). Functionally, this molybdenum-iron protein is part of the nitrogenase complex that catalyzes the key enzymatic reactions in nitrogen fixation. The protein is Nitrogenase molybdenum-iron protein beta chain (nifK2) of Methanosarcina barkeri.